We begin with the raw amino-acid sequence, 487 residues long: Selenium-binding protein 2 (487 aa).

Ala-2 is subject to N-acetylalanine. Selenite-binding residues include Cys-19 and Cys-20.

This sequence belongs to the selenium-binding protein family. Mostly expressed in seedlings, leaves and stems, and, to a lower extent, in flowers and roots.

Its function is as follows. Required for the fusion of female gametophyte polar nuclei. In Arabidopsis thaliana (Mouse-ear cress), this protein is Selenium-binding protein 2 (SBP2).